Here is a 597-residue protein sequence, read N- to C-terminus: Membrane protein insertase YidC (597 aa).

Residues 8–28 (YFVAIALSVLILIAWQFFYVS) form a helical membrane-spanning segment. The interval 38–75 (AEKAQQAQSQPGTQQAAPGQAAPGQALPGGAIPSAAES) is disordered. Positions 41-70 (AQQAQSQPGTQQAAPGQAAPGQALPGGAIP) are enriched in low complexity. The next 4 helical transmembrane spans lie at 372-392 (LFGNFGIAILITTIVVKLIFF), 446-466 (WPILIQIPVFFALYKVIYVTI), 491-511 (LFGLLPFEGPAFLHLGIWPIV), and 535-555 (FTWMPVVFTFMLASFPAGLVI).

The protein belongs to the OXA1/ALB3/YidC family. Type 1 subfamily. Interacts with the Sec translocase complex via SecD. Specifically interacts with transmembrane segments of nascent integral membrane proteins during membrane integration.

The protein localises to the cell inner membrane. In terms of biological role, required for the insertion and/or proper folding and/or complex formation of integral membrane proteins into the membrane. Involved in integration of membrane proteins that insert both dependently and independently of the Sec translocase complex, as well as at least some lipoproteins. Aids folding of multispanning membrane proteins. In Sinorhizobium medicae (strain WSM419) (Ensifer medicae), this protein is Membrane protein insertase YidC.